Here is a 257-residue protein sequence, read N- to C-terminus: 14-3-3-like protein GF14-G (257 aa).

This sequence belongs to the 14-3-3 family.

Functionally, is associated with a DNA binding complex that binds to the G box, a well-characterized cis-acting DNA regulatory element found in plant genes. The sequence is that of 14-3-3-like protein GF14-G (GF14G) from Oryza sativa subsp. japonica (Rice).